The chain runs to 187 residues: MVIDKNKIEQAIRLFLEGIGEDPNREGLRDTPKRVAKMWEEFESYREMNMTIFEEVGSYDEMVVVRDIQFYSLCEHHLLPFFGKAHVAYIPDKKVCGLSKIVRVVNKFSYRPQVQERLTAEIAEYLEKELQPKGVAVVMEAVHLCMAMRGVRNPESITVTSKLTGRFLECQKTREEFLNLINSHKKM.

Zn(2+) is bound by residues cysteine 74, histidine 77, and cysteine 145.

This sequence belongs to the GTP cyclohydrolase I family. Homomer.

The catalysed reaction is GTP + H2O = 7,8-dihydroneopterin 3'-triphosphate + formate + H(+). The protein operates within cofactor biosynthesis; 7,8-dihydroneopterin triphosphate biosynthesis; 7,8-dihydroneopterin triphosphate from GTP: step 1/1. The chain is GTP cyclohydrolase 1 from Sulfurihydrogenibium sp. (strain YO3AOP1).